The primary structure comprises 236 residues: LexA repressor (236 aa).

A DNA-binding region (H-T-H motif) is located at residues 26 to 46; sequence FDEMKDALDLRSKSGIHRLII. Residues S157 and K195 each act as for autocatalytic cleavage activity in the active site.

This sequence belongs to the peptidase S24 family. In terms of assembly, homodimer.

It catalyses the reaction Hydrolysis of Ala-|-Gly bond in repressor LexA.. Its function is as follows. Represses a number of genes involved in the response to DNA damage (SOS response), including recA and lexA. In the presence of single-stranded DNA, RecA interacts with LexA causing an autocatalytic cleavage which disrupts the DNA-binding part of LexA, leading to derepression of the SOS regulon and eventually DNA repair. The chain is LexA repressor from Methylocella silvestris (strain DSM 15510 / CIP 108128 / LMG 27833 / NCIMB 13906 / BL2).